A 133-amino-acid chain; its full sequence is ATP synthase epsilon chain (133 aa).

It belongs to the ATPase epsilon chain family. F-type ATPases have 2 components, CF(1) - the catalytic core - and CF(0) - the membrane proton channel. CF(1) has five subunits: alpha(3), beta(3), gamma(1), delta(1), epsilon(1). CF(0) has three main subunits: a, b and c.

It is found in the cell membrane. Produces ATP from ADP in the presence of a proton gradient across the membrane. The chain is ATP synthase epsilon chain from Clostridium perfringens (strain ATCC 13124 / DSM 756 / JCM 1290 / NCIMB 6125 / NCTC 8237 / Type A).